Here is a 548-residue protein sequence, read N- to C-terminus: Glucose-6-phosphate isomerase (548 aa).

Glu355 acts as the Proton donor in catalysis. Residues His386 and Lys511 contribute to the active site.

The protein belongs to the GPI family.

The protein resides in the cytoplasm. The enzyme catalyses alpha-D-glucose 6-phosphate = beta-D-fructose 6-phosphate. It functions in the pathway carbohydrate biosynthesis; gluconeogenesis. It participates in carbohydrate degradation; glycolysis; D-glyceraldehyde 3-phosphate and glycerone phosphate from D-glucose: step 2/4. Catalyzes the reversible isomerization of glucose-6-phosphate to fructose-6-phosphate. The sequence is that of Glucose-6-phosphate isomerase from Wigglesworthia glossinidia brevipalpis.